Reading from the N-terminus, the 359-residue chain is E3 ubiquitin-protein ligase RNF146 (359 aa).

Residues 38–76 form an RING-type zinc finger; that stretch reads CAICLQTCVHPVSLPCKHVFCYLCVKGASWLGKRCALCR. Residues Lys-86 and Lys-96 each participate in a glycyl lysine isopeptide (Lys-Gly) (interchain with G-Cter in ubiquitin) cross-link. The 77-residue stretch at 93–169 folds into the WWE domain; the sequence is EELKAASRGN…EHGRRRKIKR (77 aa). Positions 109, 112, and 116 each coordinate a glycoprotein. Lys-132 participates in a covalent cross-link: Glycyl lysine isopeptide (Lys-Gly) (interchain with G-Cter in ubiquitin). A glycoprotein is bound by residues Tyr-146, Gln-155, Arg-165, and Lys-177. Lys-177 participates in a covalent cross-link: Glycyl lysine isopeptide (Lys-Gly) (interchain with G-Cter in ubiquitin). Disordered stretches follow at residues 197 to 243 and 261 to 359; these read SSAD…DAGI and ERSH…VTEV. A compositionally biased stretch (low complexity) spans 199–212; the sequence is ADGADSGSAQTGAS. Over residues 217–235 the composition is skewed to polar residues; sequence VPSSTRPLTSVDGQLTSPV. The segment covering 284–298 has biased composition (acidic residues); sequence SVEETESDASSDSED. Ser-290 and Ser-294 each carry phosphoserine. The span at 306–324 shows a compositional bias: polar residues; sequence HSLTQQRPLVPNGNQTVAD.

As to quaternary structure, can form homooligomers. Interacts with PARsylated AXIN1, AXIN2, BLZF1, CASC3, H1-2, IPO7, LIG3, NCL, PARP1, XRCC1, XRCC5 and XRCC6. Interacts with DDB1, DHX15, IQGAP1, LRPPRC, PARP2, PRKDC, RUVBL2, TNKS1 and TNKS2. Binding often leads to interactor ubiquitination, in the presence of the appropriate E1 and E2 enzymes, and proteasomal degradation. Ubiquitinated; autoubiquitinated. Autoubiquitination is enhanced upon PAR-binding. Expressed at relatively high levels in the brain. Also present in spleen, heart, kidney, testis and liver. In the brain, expressed in the cerebellum, hippocampus, striatum, cortex, frontal cortex and, at lowest levels, in olfactory bulb (at protein level). Predominantly expressed in neurons.

The protein resides in the cytoplasm. It is found in the cytosol. The protein localises to the nucleus. The enzyme catalyses S-ubiquitinyl-[E2 ubiquitin-conjugating enzyme]-L-cysteine + [acceptor protein]-L-lysine = [E2 ubiquitin-conjugating enzyme]-L-cysteine + N(6)-ubiquitinyl-[acceptor protein]-L-lysine.. Its pathway is protein modification; protein ubiquitination. Its function is as follows. E3 ubiquitin-protein ligase that specifically binds poly-ADP-ribosylated (PARsylated) proteins and mediates their ubiquitination and subsequent degradation. May regulate many important biological processes, such as cell survival and DNA damage response. Acts as an activator of the Wnt signaling pathway by mediating the ubiquitination of PARsylated AXIN1 and AXIN2, 2 key components of the beta-catenin destruction complex. Acts in cooperation with tankyrase proteins (TNKS and TNKS2), which mediate PARsylation of target proteins AXIN1, AXIN2, BLZF1, CASC3, TNKS and TNKS2. Recognizes and binds tankyrase-dependent PARsylated proteins via its WWE domain and mediates their ubiquitination, leading to their degradation. Different ubiquitin linkage types have been observed: TNKS2 undergoes ubiquitination at 'Lys-48' and 'Lys-63', while AXIN1 is only ubiquitinated at 'Lys-48'. May regulate TNKS and TNKS2 subcellular location, preventing aggregation at a centrosomal location. Neuroprotective protein. Protects the brain against N-methyl-D-aspartate (NMDA) receptor-mediated glutamate excitotoxicity and ischemia, by interfering with PAR-induced cell death, called parthanatos. Prevents nuclear translocation of AIFM1 in a PAR-binding dependent manner. Does not affect PARP1 activation. Protects against cell death induced by DNA damaging agents, such as N-methyl-N-nitro-N-nitrosoguanidine (MNNG) and rescues cells from G1 arrest. Promotes cell survival after gamma-irradiation. Facilitates DNA repair. The polypeptide is E3 ubiquitin-protein ligase RNF146 (Rnf146) (Mus musculus (Mouse)).